The chain runs to 205 residues: N-(5'-phosphoribosyl)anthranilate isomerase (205 aa).

The protein belongs to the TrpF family.

The catalysed reaction is N-(5-phospho-beta-D-ribosyl)anthranilate = 1-(2-carboxyphenylamino)-1-deoxy-D-ribulose 5-phosphate. Its pathway is amino-acid biosynthesis; L-tryptophan biosynthesis; L-tryptophan from chorismate: step 3/5. The sequence is that of N-(5'-phosphoribosyl)anthranilate isomerase from Marinomonas sp. (strain MWYL1).